The sequence spans 853 residues: uncharacterized protein (853 aa).

Coiled-coil stretches lie at residues R313–A343 and E480–I528.

This is an uncharacterized protein from Ostreid herpesvirus 1 (isolate France) (OsHV-1).